A 275-amino-acid chain; its full sequence is 2-C-methyl-D-erythritol 4-phosphate cytidylyltransferase (275 aa).

It belongs to the IspD/TarI cytidylyltransferase family. IspD subfamily.

The catalysed reaction is 2-C-methyl-D-erythritol 4-phosphate + CTP + H(+) = 4-CDP-2-C-methyl-D-erythritol + diphosphate. It participates in isoprenoid biosynthesis; isopentenyl diphosphate biosynthesis via DXP pathway; isopentenyl diphosphate from 1-deoxy-D-xylulose 5-phosphate: step 2/6. Catalyzes the formation of 4-diphosphocytidyl-2-C-methyl-D-erythritol from CTP and 2-C-methyl-D-erythritol 4-phosphate (MEP). The protein is 2-C-methyl-D-erythritol 4-phosphate cytidylyltransferase of Corynebacterium jeikeium (strain K411).